We begin with the raw amino-acid sequence, 267 residues long: Ribosomal RNA small subunit methyltransferase A (267 aa).

S-adenosyl-L-methionine contacts are provided by N16, L18, G43, E64, D88, and N109.

It belongs to the class I-like SAM-binding methyltransferase superfamily. rRNA adenine N(6)-methyltransferase family. RsmA subfamily.

It localises to the cytoplasm. The enzyme catalyses adenosine(1518)/adenosine(1519) in 16S rRNA + 4 S-adenosyl-L-methionine = N(6)-dimethyladenosine(1518)/N(6)-dimethyladenosine(1519) in 16S rRNA + 4 S-adenosyl-L-homocysteine + 4 H(+). Its function is as follows. Specifically dimethylates two adjacent adenosines (A1518 and A1519) in the loop of a conserved hairpin near the 3'-end of 16S rRNA in the 30S particle. May play a critical role in biogenesis of 30S subunits. This chain is Ribosomal RNA small subunit methyltransferase A, found in Acidithiobacillus ferrooxidans (strain ATCC 23270 / DSM 14882 / CIP 104768 / NCIMB 8455) (Ferrobacillus ferrooxidans (strain ATCC 23270)).